Here is a 109-residue protein sequence, read N- to C-terminus: LTGHLCCMMIWWQATQVISPPLPVIREENNSHKMGVSLFPLKRVVTTSSTQLEMIFNCLCSRVVRTLCSRTQETLVRIQLGQNKASFHLLKSPSRRFIFNCYRAIFMFI.

The first 16 residues, 1 to 16 (LTGHLCCMMIWWQATQ), serve as a signal peptide directing secretion. The propeptide occupies 17-43 (VISPPLPVIREENNSHKMGVSLFPLKR).

Post-translationally, contains 2 disulfide bonds. Expressed by the venom gland.

The protein resides in the secreted. Probable ion channel inhibitor. The protein is U16-hexatoxin-Hi1a of Hadronyche infensa (Fraser island funnel-web spider).